Here is an 879-residue protein sequence, read N- to C-terminus: Alanine--tRNA ligase 1 (879 aa).

Zn(2+) is bound by residues H566, H570, C668, and H672.

This sequence belongs to the class-II aminoacyl-tRNA synthetase family. The cofactor is Zn(2+).

The protein localises to the cytoplasm. The enzyme catalyses tRNA(Ala) + L-alanine + ATP = L-alanyl-tRNA(Ala) + AMP + diphosphate. Catalyzes the attachment of alanine to tRNA(Ala) in a two-step reaction: alanine is first activated by ATP to form Ala-AMP and then transferred to the acceptor end of tRNA(Ala). Also edits incorrectly charged Ser-tRNA(Ala) and Gly-tRNA(Ala) via its editing domain. The protein is Alanine--tRNA ligase 1 of Lachnoclostridium phytofermentans (strain ATCC 700394 / DSM 18823 / ISDg) (Clostridium phytofermentans).